We begin with the raw amino-acid sequence, 608 residues long: UvrABC system protein C (608 aa).

Residues 22–100 (EKPGIYQYLN…IKKYKPRYNV (79 aa)) enclose the GIY-YIG domain. The UVR domain occupies 214–249 (QEISRLLYQRMQDLAAEMKFEEAQKVKEKYALIENY).

It belongs to the UvrC family. Interacts with UvrB in an incision complex.

The protein localises to the cytoplasm. Its function is as follows. The UvrABC repair system catalyzes the recognition and processing of DNA lesions. UvrC both incises the 5' and 3' sides of the lesion. The N-terminal half is responsible for the 3' incision and the C-terminal half is responsible for the 5' incision. In Bacteroides fragilis (strain ATCC 25285 / DSM 2151 / CCUG 4856 / JCM 11019 / LMG 10263 / NCTC 9343 / Onslow / VPI 2553 / EN-2), this protein is UvrABC system protein C.